A 251-amino-acid polypeptide reads, in one-letter code: Probable transcriptional regulatory protein DET0444 (251 aa).

Belongs to the TACO1 family.

The protein localises to the cytoplasm. The chain is Probable transcriptional regulatory protein DET0444 from Dehalococcoides mccartyi (strain ATCC BAA-2266 / KCTC 15142 / 195) (Dehalococcoides ethenogenes (strain 195)).